Reading from the N-terminus, the 332-residue chain is Ketol-acid reductoisomerase (NADP(+)) (332 aa).

A KARI N-terminal Rossmann domain is found at 2–182 (AKVYYDEDAS…GCTRAGLIET (181 aa)). NADP(+) contacts are provided by residues 25–28 (YGSQ), Ser51, Ser53, and 83–86 (DTIQ). The active site involves His108. Gly134 contacts NADP(+). The KARI C-terminal knotted domain maps to 183–327 (TFKEETETDL…KELRKMMPWL (145 aa)). Asp191, Glu195, Glu227, and Glu231 together coordinate Mg(2+). Ser252 contributes to the substrate binding site.

It belongs to the ketol-acid reductoisomerase family. Requires Mg(2+) as cofactor.

It catalyses the reaction (2R)-2,3-dihydroxy-3-methylbutanoate + NADP(+) = (2S)-2-acetolactate + NADPH + H(+). The catalysed reaction is (2R,3R)-2,3-dihydroxy-3-methylpentanoate + NADP(+) = (S)-2-ethyl-2-hydroxy-3-oxobutanoate + NADPH + H(+). It functions in the pathway amino-acid biosynthesis; L-isoleucine biosynthesis; L-isoleucine from 2-oxobutanoate: step 2/4. It participates in amino-acid biosynthesis; L-valine biosynthesis; L-valine from pyruvate: step 2/4. Its function is as follows. Involved in the biosynthesis of branched-chain amino acids (BCAA). Catalyzes an alkyl-migration followed by a ketol-acid reduction of (S)-2-acetolactate (S2AL) to yield (R)-2,3-dihydroxy-isovalerate. In the isomerase reaction, S2AL is rearranged via a Mg-dependent methyl migration to produce 3-hydroxy-3-methyl-2-ketobutyrate (HMKB). In the reductase reaction, this 2-ketoacid undergoes a metal-dependent reduction by NADPH to yield (R)-2,3-dihydroxy-isovalerate. The protein is Ketol-acid reductoisomerase (NADP(+)) of Persephonella marina (strain DSM 14350 / EX-H1).